We begin with the raw amino-acid sequence, 252 residues long: Adenosylcobinamide-GDP ribazoletransferase (252 aa).

7 helical membrane passes run 36-56 (LVPI…MLLV), 59-79 (FFYK…TGGI), 109-129 (VGTN…VILT), 133-153 (PAYM…GSIV), 170-192 (SFID…VIFL), 199-218 (GYII…KYFT), and 228-248 (ILGA…YAVL).

This sequence belongs to the CobS family. It depends on Mg(2+) as a cofactor.

It localises to the cell membrane. It carries out the reaction alpha-ribazole + adenosylcob(III)inamide-GDP = adenosylcob(III)alamin + GMP + H(+). The enzyme catalyses alpha-ribazole 5'-phosphate + adenosylcob(III)inamide-GDP = adenosylcob(III)alamin 5'-phosphate + GMP + H(+). It functions in the pathway cofactor biosynthesis; adenosylcobalamin biosynthesis; adenosylcobalamin from cob(II)yrinate a,c-diamide: step 7/7. Functionally, joins adenosylcobinamide-GDP and alpha-ribazole to generate adenosylcobalamin (Ado-cobalamin). Also synthesizes adenosylcobalamin 5'-phosphate from adenosylcobinamide-GDP and alpha-ribazole 5'-phosphate. The chain is Adenosylcobinamide-GDP ribazoletransferase from Clostridium acetobutylicum (strain ATCC 824 / DSM 792 / JCM 1419 / IAM 19013 / LMG 5710 / NBRC 13948 / NRRL B-527 / VKM B-1787 / 2291 / W).